The following is a 1025-amino-acid chain: Multidrug resistance protein MdtC (1025 aa).

The next 12 helical transmembrane spans lie at 3–23 (FFAL…AITL), 333–353 (EVEQ…FLFL), 360–380 (IIPA…MYLC), 387–407 (LSLM…IVVL), 431–451 (VGFT…PLLL), 463–483 (FAVT…TLTP), 528–548 (LVGV…ISIP), 853–873 (VILI…LYES), 875–895 (VHPL…LLAL), 897–917 (LFNA…IGIV), 953–973 (PIMM…LSGG), and 984–1004 (ITIV…TPVV).

This sequence belongs to the resistance-nodulation-cell division (RND) (TC 2.A.6) family. MdtC subfamily. As to quaternary structure, part of a tripartite efflux system composed of MdtA, MdtB and MdtC. MdtC forms a heteromultimer with MdtB.

Its subcellular location is the cell inner membrane. In terms of biological role, the MdtABC tripartite complex confers resistance against novobiocin and deoxycholate. This Escherichia coli O127:H6 (strain E2348/69 / EPEC) protein is Multidrug resistance protein MdtC.